A 395-amino-acid chain; its full sequence is Sensor protein DltS (395 aa).

A run of 2 helical transmembrane segments spans residues 9 to 29 and 136 to 156; these read FVFLTMSILIVVVLFLFAVSN and FLILVFTIFGFCLLAAVSLYL. In terms of domain architecture, Histidine kinase spans 177 to 387; sequence DASHELKTPI…RLEVQLPIDG (211 aa). His-180 is modified (phosphohistidine; by autocatalysis).

Its subcellular location is the cell membrane. It catalyses the reaction ATP + protein L-histidine = ADP + protein N-phospho-L-histidine.. Member of the two-component regulatory system DltS/DltR. Regulates the expression of the dlt operon. Probably phosphorylates DltR. This Streptococcus agalactiae serotype V (strain ATCC BAA-611 / 2603 V/R) protein is Sensor protein DltS (dltS).